A 448-amino-acid chain; its full sequence is 3-phosphoshikimate 1-carboxyvinyltransferase (448 aa).

Positions 38, 39, and 43 each coordinate 3-phosphoshikimate. Lys-38 contributes to the phosphoenolpyruvate binding site. Phosphoenolpyruvate contacts are provided by Gly-111 and Arg-140. Ser-185, Gln-187, Asp-335, and Lys-362 together coordinate 3-phosphoshikimate. Residue Gln-187 coordinates phosphoenolpyruvate. Asp-335 (proton acceptor) is an active-site residue. Residues Arg-366 and Arg-408 each contribute to the phosphoenolpyruvate site.

Belongs to the EPSP synthase family. Monomer.

It is found in the cytoplasm. It carries out the reaction 3-phosphoshikimate + phosphoenolpyruvate = 5-O-(1-carboxyvinyl)-3-phosphoshikimate + phosphate. Its pathway is metabolic intermediate biosynthesis; chorismate biosynthesis; chorismate from D-erythrose 4-phosphate and phosphoenolpyruvate: step 6/7. In terms of biological role, catalyzes the transfer of the enolpyruvyl moiety of phosphoenolpyruvate (PEP) to the 5-hydroxyl of shikimate-3-phosphate (S3P) to produce enolpyruvyl shikimate-3-phosphate and inorganic phosphate. The protein is 3-phosphoshikimate 1-carboxyvinyltransferase of Synechococcus elongatus (strain ATCC 33912 / PCC 7942 / FACHB-805) (Anacystis nidulans R2).